Reading from the N-terminus, the 2167-residue chain is Myosin-VIIa (2167 aa).

In terms of domain architecture, Myosin motor spans Q63 to D733. G156–T163 serves as a coordination point for ATP. 2 actin-binding regions span residues L612 to E634 and Q712 to L726. 4 consecutive IQ domains span residues L736–R758, L759–R788, L805–H827, and K828–Q857. Residues Q886–D919 are a coiled coil. The 238-residue stretch at Y1008–K1245 folds into the MyTH4 1 domain. In terms of domain architecture, FERM 1 spans I1250–S1560. The SH3 domain occupies K1558 to T1627. 2 positions are modified to phosphoserine: S1651 and S1654. The MyTH4 2 domain maps to Y1701–Q1849. Residues I1855 to M2158 form the FERM 2 domain. T2045 is modified (phosphothreonine).

Belongs to the TRAFAC class myosin-kinesin ATPase superfamily. Myosin family. In terms of assembly, homodimerizes in a two headed molecule through the formation of a coiled-coil rod. Homodimers motility is approximately 8-10 times slower than that of myosin V, and its step size is 30 nm, which is consistent with the presence of five IQ motifs in its neck region. Interacts with Cad99C (via the cytoplasmic domain). Interacts with zip and Sans. Expressed in the setae, micro- and macrochaetae on the head, thorax and wing.

Its subcellular location is the cytoplasm. The protein localises to the cell cortex. It localises to the cell projection. The protein resides in the microvillus. Functionally, myosins are actin-based motor molecules with ATPase activity. Unconventional myosins serve in intracellular movements: can function in cells as a single-molecule cargo transporter. A very slow and high-duty-ratio motor, may be suitable for tension maintenance of actin filaments. Their highly divergent tails are presumed to bind to membranous compartments, which would be moved relative to actin filaments. Plays a key role in the formation of cellular projections and other actin-based functions required for embryonic and larval viability. Necessary for auditory transduction: plays a role in Johnston's organ organization by functioning in scolopidial apical attachment and therefore to acoustic stimulus propagation from the antenna a2/a3 joint to transducing elements. Interaction with the myosin zip may be important for its function in scolopidial apical attachment. During oogenesis it has Cad99c-dependent and Cad99c-independent roles in regulating the shape and spacing of the follicle cell microvilli which secrete eggshell material such as the vitelline membrane. May be required for the normal expression of Cad99c in the follicle cell microvilli. The chain is Myosin-VIIa from Drosophila melanogaster (Fruit fly).